The sequence spans 351 residues: Peptidyl-Lys metalloendopeptidase (351 aa).

An N-terminal signal peptide occupies residues 1–22; the sequence is MFSLSSRFFLYSLCLSAVAVSA. A propeptide spanning residues 23–183 is cleaved from the precursor; the sequence is APGLSLSLSG…VARRSNLGKR (161 aa). 2 disulfides stabilise this stretch: Cys189–Cys259 and Cys261–Cys281. Residue His301 coordinates Zn(2+). The active site involves Glu302. His305 and Asp314 together coordinate Zn(2+).

Belongs to the peptidase M35 family. Zn(2+) is required as a cofactor.

The protein localises to the secreted. It carries out the reaction Preferential cleavage in proteins: -Xaa-|-Lys- (in which Xaa may be Pro).. With respect to regulation, inhibited by chelating agents such as imidazole, alpha,alpha'-bipyridine, and 1,10-phenanthroline. In Armillaria mellea (Honey mushroom), this protein is Peptidyl-Lys metalloendopeptidase (MEP).